The chain runs to 153 residues: Acetylacetone-cleaving enzyme (153 aa).

Homotetramer. Fe cation is required as a cofactor.

The catalysed reaction is acetylacetone + O2 = methylglyoxal + acetate + H(+). The protein operates within xenobiotic degradation; acetylacetone degradation. Its function is as follows. Cleaves acetylacetone to equimolar amounts of methylglyoxal and acetate, consuming one equivalent of molecular oxygen. This is Acetylacetone-cleaving enzyme (dke1) from Acinetobacter johnsonii.